The primary structure comprises 37 residues: Large ribosomal subunit protein bL36c (37 aa).

Belongs to the bacterial ribosomal protein bL36 family.

Its subcellular location is the plastid. The protein resides in the chloroplast. The chain is Large ribosomal subunit protein bL36c from Lepidium virginicum (Virginia pepperweed).